The chain runs to 305 residues: tRNA pseudouridine synthase B (305 aa).

Aspartate 50 serves as the catalytic Nucleophile.

This sequence belongs to the pseudouridine synthase TruB family. Type 1 subfamily.

It catalyses the reaction uridine(55) in tRNA = pseudouridine(55) in tRNA. In terms of biological role, responsible for synthesis of pseudouridine from uracil-55 in the psi GC loop of transfer RNAs. The protein is tRNA pseudouridine synthase B of Rhodococcus jostii (strain RHA1).